The chain runs to 89 residues: Small ribosomal subunit protein uS15 (89 aa).

This sequence belongs to the universal ribosomal protein uS15 family. In terms of assembly, part of the 30S ribosomal subunit. Forms a bridge to the 50S subunit in the 70S ribosome, contacting the 23S rRNA.

In terms of biological role, one of the primary rRNA binding proteins, it binds directly to 16S rRNA where it helps nucleate assembly of the platform of the 30S subunit by binding and bridging several RNA helices of the 16S rRNA. Functionally, forms an intersubunit bridge (bridge B4) with the 23S rRNA of the 50S subunit in the ribosome. In Yersinia enterocolitica serotype O:8 / biotype 1B (strain NCTC 13174 / 8081), this protein is Small ribosomal subunit protein uS15.